The primary structure comprises 231 residues: Demethylmenaquinone methyltransferase (231 aa).

S-adenosyl-L-methionine contacts are provided by residues threonine 62, aspartate 80, 100–101 (DA), and serine 117.

This sequence belongs to the class I-like SAM-binding methyltransferase superfamily. MenG/UbiE family.

The enzyme catalyses a 2-demethylmenaquinol + S-adenosyl-L-methionine = a menaquinol + S-adenosyl-L-homocysteine + H(+). It functions in the pathway quinol/quinone metabolism; menaquinone biosynthesis; menaquinol from 1,4-dihydroxy-2-naphthoate: step 2/2. Functionally, methyltransferase required for the conversion of demethylmenaquinol (DMKH2) to menaquinol (MKH2). This is Demethylmenaquinone methyltransferase from Mycobacterium marinum (strain ATCC BAA-535 / M).